A 614-amino-acid chain; its full sequence is BTB/POZ domain-containing protein At5g48800 (614 aa).

The BTB domain maps to 43–111 (SDITIEVNGG…CYGINFEITS (69 aa)). In terms of domain architecture, NPH3 spans 219–484 (DWWIEDLSVL…VQVLYFEQLK (266 aa)). Position 425 is a phosphotyrosine (Y425). Disordered stretches follow at residues 492–525 (SYSD…KDNY) and 583–614 (GHSS…ASTD). Residues 507 to 521 (SWRINSGALSATMSP) show a composition bias toward polar residues. Positions 522–562 (KDNYASLRRENRELKLELARLRMRLNDLEKEHICMKRDMQR) form a coiled coil. A compositionally biased stretch (low complexity) spans 583–597 (GHSSSRGSSSPSKQS).

This sequence belongs to the NPH3 family.

Its pathway is protein modification; protein ubiquitination. In terms of biological role, may act as a substrate-specific adapter of an E3 ubiquitin-protein ligase complex (CUL3-RBX1-BTB) which mediates the ubiquitination and subsequent proteasomal degradation of target proteins. This Arabidopsis thaliana (Mouse-ear cress) protein is BTB/POZ domain-containing protein At5g48800.